Reading from the N-terminus, the 962-residue chain is Glycine dehydrogenase (decarboxylating) (962 aa).

N6-(pyridoxal phosphate)lysine is present on Lys-709.

The protein belongs to the GcvP family. In terms of assembly, the glycine cleavage system is composed of four proteins: P, T, L and H. Pyridoxal 5'-phosphate is required as a cofactor.

The catalysed reaction is N(6)-[(R)-lipoyl]-L-lysyl-[glycine-cleavage complex H protein] + glycine + H(+) = N(6)-[(R)-S(8)-aminomethyldihydrolipoyl]-L-lysyl-[glycine-cleavage complex H protein] + CO2. Its function is as follows. The glycine cleavage system catalyzes the degradation of glycine. The P protein binds the alpha-amino group of glycine through its pyridoxal phosphate cofactor; CO(2) is released and the remaining methylamine moiety is then transferred to the lipoamide cofactor of the H protein. This Shewanella pealeana (strain ATCC 700345 / ANG-SQ1) protein is Glycine dehydrogenase (decarboxylating).